The primary structure comprises 300 residues: Cation-efflux pump FieF (300 aa).

The next 4 helical transmembrane spans lie at alanine 12 to tyrosine 32, leucine 40 to valine 60, alanine 82 to phenylalanine 102, and proline 114 to tyrosine 134. Zn(2+) is bound by residues aspartate 45 and aspartate 49. Zn(2+) is bound by residues histidine 153 and aspartate 157. 2 helical membrane passes run glutamine 155–phenylalanine 175 and alanine 178–glycine 198.

It belongs to the cation diffusion facilitator (CDF) transporter (TC 2.A.4) family. FieF subfamily. As to quaternary structure, homodimer.

Its subcellular location is the cell inner membrane. It carries out the reaction Zn(2+)(in) + H(+)(out) = Zn(2+)(out) + H(+)(in). The catalysed reaction is Cd(2+)(in) + H(+)(out) = Cd(2+)(out) + H(+)(in). The enzyme catalyses Fe(2+)(in) + H(+)(out) = Fe(2+)(out) + H(+)(in). In terms of biological role, divalent metal cation transporter which exports Zn(2+), Cd(2+) and possibly Fe(2+). May be involved in zinc and iron detoxification by efflux. In Serratia proteamaculans (strain 568), this protein is Cation-efflux pump FieF.